We begin with the raw amino-acid sequence, 955 residues long: MTEPGSYKETVNLPQTAFDMRANAVKREPELQKFWAENQIYENLSQENPGDPFILHDGPPYANGDLHIGHALNKILKDIINKYWMLQGRKVRYVPGWDCHGLPIELKVLQGMKSEQRAALTPLSLRQAAKEFALQTVERQKQSFKRYGVWGEWDNPYLTLKPEYEAAQIGVFGQMVLKGYIYRGLKPVYWSPSSQTALAEAELEYPEGHTSRSIYVSFALTSLSATAEAVLKDYLPNLKVAIWTTTPWTIPGNLAVALNPDLTYAVVEKDGSYLLVANELVERLETTLGVSLPIKTTIAGQALEHSTYQHPLFDRQGPLVMGDYVTTDSGTGLVHTAPGHGQEDYVVGQHYGLPILSPVDGNGRFTEEAGQFAGLKVLDEGNEAVIQALQQVGALLKEEAYSHKYPYDWRTKKPVILRATEQWFASVEGFREAALQAIAQVQWIPAQGENRITAMVSERSDWCISRQRNWGVPIPVFYDEETGEPLLNAETIAHVQAIVAEKGSDAWWELSIEELLPQAYRNNGRRYRKGTDTMDVWFDSGSSWAAVLEQREQLRYPAEMYLEGSDQHRGWFQSSLLTSVATHGIAPYKTVLTHGFVLDEQGRKMSKSLGNVVDPAIVIEGGKNQKEDPPYGADILRLWVSSVDYSSDVPLGKNILKQMADIYRKIRNTARFLLGNLHDFDPANNKVEYDRLPQLDRYMLHRIVEVFTEVNEAFTSYQFFRFFQTVQNFCVVDLSNFYLDIAKDRLYISAPDDFRRRSCQTVLWIALENLAKAIAPVVPHLAEDIWQFLPYPTPYKSVFEAGWVSLDATWTNPDPQLLETFEQVRLLRFKVNECLEKLRVNKVIGASLEAKVLLYIADPEKRQQWQNLNPPALAAISGVDELRYFFLTSQVELLNSPDQLSELKSEYRFEFGDSSGGVLPADGQKCDRCWNYSTYVGKDDKHLLLCERCVAVMER.

Positions 60-70 (PYANGDLHIGH) match the 'HIGH' region motif. Residue Glu563 participates in L-isoleucyl-5'-AMP binding. The 'KMSKS' region signature appears at 604–608 (KMSKS). Residue Lys607 participates in ATP binding. Cys926, Cys929, Cys946, and Cys949 together coordinate Zn(2+).

Belongs to the class-I aminoacyl-tRNA synthetase family. IleS type 1 subfamily. In terms of assembly, monomer. Zn(2+) serves as cofactor.

It is found in the cytoplasm. The catalysed reaction is tRNA(Ile) + L-isoleucine + ATP = L-isoleucyl-tRNA(Ile) + AMP + diphosphate. Catalyzes the attachment of isoleucine to tRNA(Ile). As IleRS can inadvertently accommodate and process structurally similar amino acids such as valine, to avoid such errors it has two additional distinct tRNA(Ile)-dependent editing activities. One activity is designated as 'pretransfer' editing and involves the hydrolysis of activated Val-AMP. The other activity is designated 'posttransfer' editing and involves deacylation of mischarged Val-tRNA(Ile). This chain is Isoleucine--tRNA ligase, found in Cyanothece sp. (strain PCC 7425 / ATCC 29141).